A 295-amino-acid polypeptide reads, in one-letter code: Cyclic dipyrimidine nucleotide synthase CdnE (295 aa).

A disordered region spans residues 1–25 (MSIDWEQTFRKWSKPSSETESTKAE). UTP-binding residues include glutamine 51, serine 53, and asparagine 59. Mg(2+) is bound by residues aspartate 65 and aspartate 67. Aspartate 67, aspartate 124, and lysine 125 together coordinate UTP. Positions 128 and 139 each coordinate Mg(2+). Residues aspartate 139, asparagine 173, lysine 201, and serine 220 each coordinate UTP. Residues 274–276 (QMW) carry the Pyrimidine specificity motif (R/Q)xW in donor pocket motif.

It belongs to the CD-NTase family. E02 subfamily. The cofactor is Mg(2+).

The enzyme catalyses 2 UTP = c-di-UMP + 2 diphosphate. It carries out the reaction UTP + CTP = cyclic CMP-UMP + 2 diphosphate. Its function is as follows. Cyclic nucleotide synthase (second messenger synthase) of a CBASS antivirus system. CBASS (cyclic oligonucleotide-based antiphage signaling system) provides immunity against bacteriophage. The CD-NTase protein synthesizes cyclic nucleotides in response to infection; these serve as specific second messenger signals. The signals activate a diverse range of effectors, leading to bacterial cell death and thus abortive phage infection. A type I-B(UU) CBASS system. In terms of biological role, cyclic dinucleotide synthase that catalyzes the synthesis of 3',3'-cyclic UMP-UMP (c-di-UMP) as the major product, and of 3',3'-cyclic CMP-UMP as a minor product, which are second messengers for cell signal transduction. The protein is Cyclic dipyrimidine nucleotide synthase CdnE of Legionella pneumophila.